The following is a 493-amino-acid chain: 11S globulin seed storage protein G3 (493 aa).

Residues 1–20 (MASKATLLLAFTLLFATCIA) form the signal peptide. Disulfide bonds link cysteine 32-cysteine 65 and cysteine 103-cysteine 312. The region spanning 37–248 (IEALEPIEVI…SFNVDQETAQ (212 aa)) is the Cupin type-1 1 domain. Disordered stretches follow at residues 190-229 (PQAQAQSQQQQQRQPRQQSPQRQRQRQRQGQGQNAGNIFN) and 269-305 (IVRPPQDRRSPRQQQEQATSPRQQQEQQQGRRGGWSN). Composition is skewed to low complexity over residues 191-221 (QAQAQSQQQQQRQPRQQSPQRQRQRQRQGQG) and 280-298 (RQQQEQATSPRQQQEQQQG). The Cupin type-1 2 domain maps to 318–467 (VNIDNPSQAD…RYQLSREEAQ (150 aa)).

Belongs to the 11S seed storage protein (globulins) family. Hexamer; each subunit is composed of an acidic and a basic chain derived from a single precursor and linked by a disulfide bond.

In terms of biological role, this is a seed storage protein. The polypeptide is 11S globulin seed storage protein G3 (HAG3) (Helianthus annuus (Common sunflower)).